Here is a 398-residue protein sequence, read N- to C-terminus: Cell division protein FtsZ (398 aa).

Residues 21–25, 108–110, E139, R143, and D187 each bind GTP; these read GGGGN and GTG.

The protein belongs to the FtsZ family. Homodimer. Polymerizes to form a dynamic ring structure in a strictly GTP-dependent manner. Interacts directly with several other division proteins.

Its subcellular location is the cytoplasm. Its function is as follows. Essential cell division protein that forms a contractile ring structure (Z ring) at the future cell division site. The regulation of the ring assembly controls the timing and the location of cell division. One of the functions of the FtsZ ring is to recruit other cell division proteins to the septum to produce a new cell wall between the dividing cells. Binds GTP and shows GTPase activity. This Pseudomonas putida (strain ATCC 47054 / DSM 6125 / CFBP 8728 / NCIMB 11950 / KT2440) protein is Cell division protein FtsZ.